The following is a 749-amino-acid chain: 1,4-alpha-glucan branching enzyme GlgB (749 aa).

The Nucleophile role is filled by Asp-415. Glu-468 (proton donor) is an active-site residue.

The protein belongs to the glycosyl hydrolase 13 family. GlgB subfamily. In terms of assembly, monomer.

The catalysed reaction is Transfers a segment of a (1-&gt;4)-alpha-D-glucan chain to a primary hydroxy group in a similar glucan chain.. It participates in glycan biosynthesis; glycogen biosynthesis. Catalyzes the formation of the alpha-1,6-glucosidic linkages in glycogen by scission of a 1,4-alpha-linked oligosaccharide from growing alpha-1,4-glucan chains and the subsequent attachment of the oligosaccharide to the alpha-1,6 position. This is 1,4-alpha-glucan branching enzyme GlgB from Nitrosococcus oceani (strain ATCC 19707 / BCRC 17464 / JCM 30415 / NCIMB 11848 / C-107).